The primary structure comprises 371 residues: UDP-N-acetylglucosamine--N-acetylmuramyl-(pentapeptide) pyrophosphoryl-undecaprenol N-acetylglucosamine transferase (371 aa).

UDP-N-acetyl-alpha-D-glucosamine is bound by residues 10–12, N122, R166, S196, and Q301; that span reads TGG.

Belongs to the glycosyltransferase 28 family. MurG subfamily.

The protein localises to the cell inner membrane. The enzyme catalyses di-trans,octa-cis-undecaprenyl diphospho-N-acetyl-alpha-D-muramoyl-L-alanyl-D-glutamyl-meso-2,6-diaminopimeloyl-D-alanyl-D-alanine + UDP-N-acetyl-alpha-D-glucosamine = di-trans,octa-cis-undecaprenyl diphospho-[N-acetyl-alpha-D-glucosaminyl-(1-&gt;4)]-N-acetyl-alpha-D-muramoyl-L-alanyl-D-glutamyl-meso-2,6-diaminopimeloyl-D-alanyl-D-alanine + UDP + H(+). Its pathway is cell wall biogenesis; peptidoglycan biosynthesis. In terms of biological role, cell wall formation. Catalyzes the transfer of a GlcNAc subunit on undecaprenyl-pyrophosphoryl-MurNAc-pentapeptide (lipid intermediate I) to form undecaprenyl-pyrophosphoryl-MurNAc-(pentapeptide)GlcNAc (lipid intermediate II). In Halothermothrix orenii (strain H 168 / OCM 544 / DSM 9562), this protein is UDP-N-acetylglucosamine--N-acetylmuramyl-(pentapeptide) pyrophosphoryl-undecaprenol N-acetylglucosamine transferase.